Consider the following 279-residue polypeptide: Protoheme IX farnesyltransferase (279 aa).

9 consecutive transmembrane segments (helical) span residues 1-21, 29-49, 79-99, 101-121, 128-148, 156-176, 200-220, 225-245, and 254-274; these read MIKPGIILGNIICLSGGFFLA, IFFLKTVFGLILIISSSCILN, ILFFFSIILLILGLLVFYIYI, FLCTIISFFGFFFYVYLYSYL, FSTFVGSVSGSLPPIIGYVAV, CTILFFMFSFWQIAHSYSIII, IIFISICILNLFFFNFLLYFF, FFYFLYTSFFIFLWFIFSFLS, and IWSRIMFFFSIFIIFMISFLM.

Belongs to the UbiA prenyltransferase family. Protoheme IX farnesyltransferase subfamily.

Its subcellular location is the cell membrane. It catalyses the reaction heme b + (2E,6E)-farnesyl diphosphate + H2O = Fe(II)-heme o + diphosphate. Its pathway is porphyrin-containing compound metabolism; heme O biosynthesis; heme O from protoheme: step 1/1. Functionally, converts heme B (protoheme IX) to heme O by substitution of the vinyl group on carbon 2 of heme B porphyrin ring with a hydroxyethyl farnesyl side group. This Buchnera aphidicola subsp. Cinara cedri (strain Cc) protein is Protoheme IX farnesyltransferase.